The sequence spans 347 residues: Selenide, water dikinase (347 aa).

Residue C17 is part of the active site. Residues K20 and 48 to 50 contribute to the ATP site; that span reads TRD. D51 contacts Mg(2+). ATP contacts are provided by residues D68, D91, and 139-141; that span reads GHS. D91 lines the Mg(2+) pocket. D227 provides a ligand contact to Mg(2+).

It belongs to the selenophosphate synthase 1 family. Class I subfamily. As to quaternary structure, homodimer. Mg(2+) is required as a cofactor.

It catalyses the reaction hydrogenselenide + ATP + H2O = selenophosphate + AMP + phosphate + 2 H(+). Its function is as follows. Synthesizes selenophosphate from selenide and ATP. The chain is Selenide, water dikinase from Salmonella typhi.